We begin with the raw amino-acid sequence, 370 residues long: Developmentally-regulated GTP-binding protein 1 homolog (370 aa).

Residues 65–292 enclose the OBG-type G domain; that stretch reads ARVGLIGFPS…LLDKIWEYLK (228 aa). GTP-binding positions include 71–78, 117–121, and 250–253; these read GFPSVGKS, DLPGI, and NKID. The TGS domain occupies 292–369; it reads KLIRVYTKPK…ADEDIVQIVK (78 aa).

It belongs to the TRAFAC class OBG-HflX-like GTPase superfamily. OBG GTPase family.

The sequence is that of Developmentally-regulated GTP-binding protein 1 homolog (drg1) from Dictyostelium discoideum (Social amoeba).